A 266-amino-acid chain; its full sequence is Glucose 1-dehydrogenase (266 aa).

15–39 is a binding site for NADP(+); the sequence is LVTGASQGIGEATALRFAEEGAQVA. Residue serine 149 participates in substrate binding. Catalysis depends on tyrosine 162, which acts as the Proton acceptor.

Belongs to the short-chain dehydrogenases/reductases (SDR) family. As to quaternary structure, homotetramer or homooctamer.

The catalysed reaction is D-glucose + NADP(+) = D-glucono-1,5-lactone + NADPH + H(+). In terms of biological role, oxidizes both D-glucose and D-mannose, but is 15 times more catalytically efficient with mannose. Strictly dependent on NADP. This is Glucose 1-dehydrogenase from Gluconobacter oxydans (strain 621H) (Gluconobacter suboxydans).